The chain runs to 187 residues: Putative protein 2 (187 aa).

2 helical membrane-spanning segments follow: residues 10-27 (MLAA…NVGV) and 99-121 (VTII…LLLV).

The protein belongs to the TMEM9 family.

Its subcellular location is the membrane. The sequence is that of Putative protein 2 from Takifugu rubripes (Japanese pufferfish).